Here is a 500-residue protein sequence, read N- to C-terminus: V-type proton ATPase subunit B (500 aa).

The protein belongs to the ATPase alpha/beta chains family. As to quaternary structure, V-ATPase is a heteromultimeric enzyme composed of a peripheral catalytic V1 complex (main components: subunits A, B, C, D, E, and F) attached to an integral membrane V0 proton pore complex (main component: the proteolipid protein).

Its function is as follows. Non-catalytic subunit of the peripheral V1 complex of vacuolar ATPase. V-ATPase is responsible for acidifying a variety of intracellular compartments in eukaryotic cells. The sequence is that of V-type proton ATPase subunit B from Cyanidium caldarium (Red alga).